A 77-amino-acid polypeptide reads, in one-letter code: MENFDKVKDIIVDRLGVDADKVTEDASFKDDLGADSLDIAELVMELEDEFGTEIPDEEAEKINTVGDAVNFINNLEK.

The Carrier domain maps to 1–76; sequence MENFDKVKDI…DAVNFINNLE (76 aa). Ser-36 bears the O-(pantetheine 4'-phosphoryl)serine mark.

The protein belongs to the acyl carrier protein (ACP) family. In terms of processing, 4'-phosphopantetheine is transferred from CoA to a specific serine of apo-ACP by AcpS. This modification is essential for activity because fatty acids are bound in thioester linkage to the sulfhydryl of the prosthetic group.

Its subcellular location is the cytoplasm. It participates in lipid metabolism; fatty acid biosynthesis. Its function is as follows. Carrier of the growing fatty acid chain in fatty acid biosynthesis. This Staphylococcus carnosus (strain TM300) protein is Acyl carrier protein.